The sequence spans 372 residues: Protein RecA (372 aa).

Residue 66 to 73 participates in ATP binding; that stretch reads GPESSGKT. Positions 328–359 are disordered; it reads GVGVRPEEPTATESGPDAATAESAPAVPAPAT. Over residues 345–359 the composition is skewed to low complexity; it reads AATAESAPAVPAPAT.

Belongs to the RecA family.

Its subcellular location is the cytoplasm. Functionally, can catalyze the hydrolysis of ATP in the presence of single-stranded DNA, the ATP-dependent uptake of single-stranded DNA by duplex DNA, and the ATP-dependent hybridization of homologous single-stranded DNAs. It interacts with LexA causing its activation and leading to its autocatalytic cleavage. The polypeptide is Protein RecA (Streptomyces ambofaciens).